A 550-amino-acid polypeptide reads, in one-letter code: Glucose-6-phosphate isomerase (550 aa).

The active-site Proton donor is Glu356. Catalysis depends on residues His387 and Lys515.

The protein belongs to the GPI family.

It is found in the cytoplasm. The catalysed reaction is alpha-D-glucose 6-phosphate = beta-D-fructose 6-phosphate. Its pathway is carbohydrate biosynthesis; gluconeogenesis. It functions in the pathway carbohydrate degradation; glycolysis; D-glyceraldehyde 3-phosphate and glycerone phosphate from D-glucose: step 2/4. Catalyzes the reversible isomerization of glucose-6-phosphate to fructose-6-phosphate. In Vibrio parahaemolyticus serotype O3:K6 (strain RIMD 2210633), this protein is Glucose-6-phosphate isomerase.